Consider the following 185-residue polypeptide: MILVIGLGNPGIVYQYTRHNIGFIAIERIANKYHLSFSTKQKFNCKIAEAIIDRQKICFIKPTTYMNLSGKSVILVKTYYNINYEKVFVIHDDIDLEIGRIKFKTGGSNGGHNGLKSIDSIIGSHYNRIRIGIGRPQNNHDVADYVLSNFSESEYKTVMQSIDNVANNFGLILEHKLAEFKNKIV.

Residue Tyr14 coordinates tRNA. The active-site Proton acceptor is the His19. Residues Tyr65, Asn67, and Asn113 each contribute to the tRNA site.

It belongs to the PTH family. Monomer.

Its subcellular location is the cytoplasm. It catalyses the reaction an N-acyl-L-alpha-aminoacyl-tRNA + H2O = an N-acyl-L-amino acid + a tRNA + H(+). Its function is as follows. Hydrolyzes ribosome-free peptidyl-tRNAs (with 1 or more amino acids incorporated), which drop off the ribosome during protein synthesis, or as a result of ribosome stalling. Functionally, catalyzes the release of premature peptidyl moieties from peptidyl-tRNA molecules trapped in stalled 50S ribosomal subunits, and thus maintains levels of free tRNAs and 50S ribosomes. The sequence is that of Peptidyl-tRNA hydrolase from Rickettsia typhi (strain ATCC VR-144 / Wilmington).